Reading from the N-terminus, the 653-residue chain is Fructose-1,6-bisphosphatase class 3 2 (653 aa).

The protein belongs to the FBPase class 3 family. Mn(2+) serves as cofactor.

The catalysed reaction is beta-D-fructose 1,6-bisphosphate + H2O = beta-D-fructose 6-phosphate + phosphate. Its pathway is carbohydrate biosynthesis; gluconeogenesis. The chain is Fructose-1,6-bisphosphatase class 3 2 from Clostridium beijerinckii (strain ATCC 51743 / NCIMB 8052) (Clostridium acetobutylicum).